The following is a 609-amino-acid chain: DNA mismatch repair protein MutL (609 aa).

The protein belongs to the DNA mismatch repair MutL/HexB family.

Functionally, this protein is involved in the repair of mismatches in DNA. It is required for dam-dependent methyl-directed DNA mismatch repair. May act as a 'molecular matchmaker', a protein that promotes the formation of a stable complex between two or more DNA-binding proteins in an ATP-dependent manner without itself being part of a final effector complex. In Rickettsia felis (strain ATCC VR-1525 / URRWXCal2) (Rickettsia azadi), this protein is DNA mismatch repair protein MutL.